The chain runs to 1098 residues: Platelet-derived growth factor receptor beta (1098 aa).

An N-terminal signal peptide occupies residues 1-31 (MGLPGVIPALVLRGQLLLSVLWLLGPQTSRG). Topologically, residues 32-531 (LVITPPGPEF…VVPHSLPFKV (500 aa)) are extracellular. Ig-like C2-type domains follow at residues 33–119 (VITP…YIFV), 128–209 (PMDS…YSLQ), 213–308 (INVS…INIS), 330–402 (HRSR…HEDD), and 415–523 (PVRV…VTVV). Asn-44, Asn-88, and Asn-102 each carry an N-linked (GlcNAc...) asparagine glycan. An intrachain disulfide couples Cys-53 to Cys-99. Cys-148 and Cys-189 are oxidised to a cystine. Residue Asn-214 is glycosylated (N-linked (GlcNAc...) asparagine). A disulfide bridge links Cys-234 with Cys-290. Residues Asn-291, Asn-306, Asn-353, Asn-370, Asn-444, Asn-467, and Asn-478 are each glycosylated (N-linked (GlcNAc...) asparagine). Cys-435 and Cys-507 form a disulfide bridge. Residues 532–552 (VVISAILALVVLTVISLIILI) traverse the membrane as a helical segment. Residues 553–1098 (MLWQKKPRYE…PLAEAEDSFL (546 aa)) lie on the Cytoplasmic side of the membrane. A phosphotyrosine; by autocatalysis mark is found at Tyr-561, Tyr-578, and Tyr-580. Residues 599-961 (LVLGRTLGSG…QLVLLLERLL (363 aa)) form the Protein kinase domain. Residues 605–613 (LGSGAFGQV) and Lys-633 each bind ATP. The residue at position 685 (Tyr-685) is a Phosphotyrosine; by ABL1 and ABL2. Residues Tyr-715, Tyr-739, Tyr-750, Tyr-762, Tyr-770, Tyr-774, and Tyr-777 each carry the phosphotyrosine; by autocatalysis modification. The active-site Proton acceptor is the Asp-825. Tyr-856 carries the phosphotyrosine; by autocatalysis modification. Residues Tyr-933 and Tyr-969 each carry the phosphotyrosine; by ABL1 and ABL2 modification. 2 positions are modified to phosphotyrosine; by autocatalysis: Tyr-1008 and Tyr-1020. The interval 1016–1098 (SDNDYIIPLP…PLAEAEDSFL (83 aa)) is disordered. The span at 1042-1059 (SLASSTLNEVNTSSTISC) shows a compositional bias: polar residues. Positions 1062–1082 (PLELQEEPQQAEPEAQLEQPQ) are enriched in low complexity.

The protein belongs to the protein kinase superfamily. Tyr protein kinase family. CSF-1/PDGF receptor subfamily. In terms of assembly, interacts with homodimeric PDGFB and PDGFD, and with heterodimers formed by PDGFA and PDGFB. May also interact with homodimeric PDGFC. Monomer in the absence of bound ligand. Interaction with homodimeric PDGFB, heterodimers formed by PDGFA and PDGFB or homodimeric PDGFD, leads to receptor dimerization, where both PDGFRA homodimers and heterodimers with PDGFRB are observed. Interacts with SH2B2/APS. Interacts directly (tyrosine phosphorylated) with SHB. Interacts (tyrosine phosphorylated) with PIK3R1 and RASA1. Interacts (tyrosine phosphorylated) with CBL. Interacts (tyrosine phosphorylated) with SRC and SRC family kinases. Interacts (tyrosine phosphorylated) with PIK3C2B, maybe indirectly. Interacts (tyrosine phosphorylated) with SHC1, GRB7, GRB10 and NCK1. Interaction with GRB2 is mediated by SHC1. Interacts (via C-terminus) with NHERF1. Post-translationally, autophosphorylated on tyrosine residues upon ligand binding. Autophosphorylation occurs in trans, i.e. one subunit of the dimeric receptor phosphorylates tyrosine residues on the other subunit. Phosphorylation at Tyr-578, and to a lesser degree, Tyr-580 is important for interaction with SRC. Phosphorylation at Tyr-715 is important for interaction with GRB2. Phosphorylation at Tyr-739 and Tyr-750 is important for interaction with PIK3R1. Phosphorylation at Tyr-750 is important for interaction with NCK1. Phosphorylation at Tyr-770 and Tyr-856 is important for interaction with RASA1/GAP. Phosphorylation at Tyr-856 is important for efficient phosphorylation of PLCG1 and PTPN11, resulting in increased phosphorylation of AKT1, MAPK1/ERK2 and/or MAPK3/ERK1, PDCD6IP/ALIX and STAM, and in increased cell proliferation. Phosphorylation at Tyr-1008 is important for interaction with PTPN11. Phosphorylation at Tyr-1008 and Tyr-1020 is important for interaction with PLCG1. Dephosphorylated by PTPRJ at Tyr-750, Tyr-856, Tyr-1008 and Tyr-1020. Dephosphorylated by PTPN2 at Tyr-578 and Tyr-1020. In terms of processing, N-glycosylated. Ubiquitinated. After autophosphorylation, the receptor is polyubiquitinated, leading to its degradation. In terms of tissue distribution, weakly expressed in glomerular mesangial cells and interstitial cells. Up-regulated in areas of renal fibrosis. In mice with unilateral ureteral obstruction, increased expression in interstitial cells at day 4 and expression is markedly elevated at day 7 and is maximal at day 14.

The protein localises to the cell membrane. Its subcellular location is the cytoplasmic vesicle. It localises to the lysosome lumen. The enzyme catalyses L-tyrosyl-[protein] + ATP = O-phospho-L-tyrosyl-[protein] + ADP + H(+). With respect to regulation, present in an inactive conformation in the absence of bound ligand. Binding of PDGFB and/or PDGFD leads to dimerization and activation by autophosphorylation on tyrosine residues. Its function is as follows. Tyrosine-protein kinase that acts as a cell-surface receptor for homodimeric PDGFB and PDGFD and for heterodimers formed by PDGFA and PDGFB, and plays an essential role in the regulation of embryonic development, cell proliferation, survival, differentiation, chemotaxis and migration. Plays an essential role in blood vessel development by promoting proliferation, migration and recruitment of pericytes and smooth muscle cells to endothelial cells. Plays a role in the migration of vascular smooth muscle cells and the formation of neointima at vascular injury sites. Required for normal development of the cardiovascular system. Required for normal recruitment of pericytes (mesangial cells) in the kidney glomerulus, and for normal formation of a branched network of capillaries in kidney glomeruli. Promotes rearrangement of the actin cytoskeleton and the formation of membrane ruffles. Binding of its cognate ligands - homodimeric PDGFB, heterodimers formed by PDGFA and PDGFB or homodimeric PDGFD -leads to the activation of several signaling cascades; the response depends on the nature of the bound ligand and is modulated by the formation of heterodimers between PDGFRA and PDGFRB. Phosphorylates PLCG1, PIK3R1, PTPN11, RASA1/GAP, CBL, SHC1 and NCK1. Activation of PLCG1 leads to the production of the cellular signaling molecules diacylglycerol and inositol 1,4,5-trisphosphate, mobilization of cytosolic Ca(2+) and the activation of protein kinase C. Phosphorylation of PIK3R1, the regulatory subunit of phosphatidylinositol 3-kinase, leads to the activation of the AKT1 signaling pathway. Phosphorylation of SHC1, or of the C-terminus of PTPN11, creates a binding site for GRB2, resulting in the activation of HRAS, RAF1 and down-stream MAP kinases, including MAPK1/ERK2 and/or MAPK3/ERK1. Promotes phosphorylation and activation of SRC family kinases. Promotes phosphorylation of PDCD6IP/ALIX and STAM. Receptor signaling is down-regulated by protein phosphatases that dephosphorylate the receptor and its down-stream effectors, and by rapid internalization of the activated receptor. In Mus musculus (Mouse), this protein is Platelet-derived growth factor receptor beta (Pdgfrb).